The sequence spans 269 residues: Tryptophan synthase alpha chain (269 aa).

Residues E56 and D67 each act as proton acceptor in the active site.

It belongs to the TrpA family. Tetramer of two alpha and two beta chains.

The enzyme catalyses (1S,2R)-1-C-(indol-3-yl)glycerol 3-phosphate + L-serine = D-glyceraldehyde 3-phosphate + L-tryptophan + H2O. It functions in the pathway amino-acid biosynthesis; L-tryptophan biosynthesis; L-tryptophan from chorismate: step 5/5. The alpha subunit is responsible for the aldol cleavage of indoleglycerol phosphate to indole and glyceraldehyde 3-phosphate. This Mycobacterium marinum (strain ATCC BAA-535 / M) protein is Tryptophan synthase alpha chain.